Here is a 165-residue protein sequence, read N- to C-terminus: Protein SprT (165 aa).

Residues L22–V163 enclose the SprT-like domain. H78 contacts Zn(2+). Residue E79 is part of the active site. Position 82 (H82) interacts with Zn(2+).

It belongs to the SprT family. The cofactor is Zn(2+).

It is found in the cytoplasm. This is Protein SprT from Salmonella paratyphi A (strain ATCC 9150 / SARB42).